The sequence spans 547 residues: Chaperonin GroEL (547 aa).

Residues T29–P32, K50, D86–T90, G414, and D495 each bind ATP. The interval P525–F547 is disordered. Over residues G537–F547 the composition is skewed to gly residues.

This sequence belongs to the chaperonin (HSP60) family. Forms a cylinder of 14 subunits composed of two heptameric rings stacked back-to-back. Interacts with the co-chaperonin GroES.

It is found in the cytoplasm. It catalyses the reaction ATP + H2O + a folded polypeptide = ADP + phosphate + an unfolded polypeptide.. Functionally, together with its co-chaperonin GroES, plays an essential role in assisting protein folding. The GroEL-GroES system forms a nano-cage that allows encapsulation of the non-native substrate proteins and provides a physical environment optimized to promote and accelerate protein folding. The protein is Chaperonin GroEL of Rickettsia felis (strain ATCC VR-1525 / URRWXCal2) (Rickettsia azadi).